A 637-amino-acid chain; its full sequence is ATP-dependent rRNA helicase SPB4 (637 aa).

The Q motif signature appears at 14 to 42; that stretch reads WDTLNPPLSEWIRDAVATMGFDQMTPVQA. A Helicase ATP-binding domain is found at 45 to 247; that stretch reads LPHFMGNKDV…RVGLRNPVKI (203 aa). 58–65 contacts ATP; the sequence is AVTGSGKT. The DEAD box signature appears at 195-198; the sequence is DEAD. The 156-residue stretch at 283-438 folds into the Helicase C-terminal domain; sequence ALAELLRQLP…TITTSEDDAA (156 aa). A coiled-coil region spans residues 524 to 631; sequence KEKTREQQRK…AAAKQEKDGE (108 aa). Basic and acidic residues-rich tracts occupy residues 535-553, 563-576, 583-618, and 625-637; these read ALEE…EEFK, SAKH…VERR, RDAE…EKAA, and KQEK…GFDD. The interval 535–637 is disordered; that stretch reads ALEEEKSGVK…KDGEFKGFDD (103 aa).

This sequence belongs to the DEAD box helicase family. DDX55/SPB4 subfamily. Component of pre-60S ribosomal complexes.

It is found in the nucleus. The protein localises to the nucleolus. The catalysed reaction is ATP + H2O = ADP + phosphate + H(+). ATP-binding RNA helicase involved in the biogenesis of 60S ribosomal subunits. Binds 90S pre-ribosomal particles and dissociates from pre-60S ribosomal particles after processing of 27SB pre-rRNA. Required for the normal formation of 18S rRNA through the processing of pre-rRNAs at sites A0, A1 and A2, and the normal formation of 25S and 5.8S rRNAs through the processing of pre-rRNAs at sites C1 and C2. The chain is ATP-dependent rRNA helicase SPB4 from Gibberella zeae (strain ATCC MYA-4620 / CBS 123657 / FGSC 9075 / NRRL 31084 / PH-1) (Wheat head blight fungus).